The following is a 472-amino-acid chain: F420-non-reducing hydrogenase subunit A (472 aa).

Residues Cys61, Cys64, Cys442, and Cys445 each coordinate Ni(2+).

Belongs to the [NiFe]/[NiFeSe] hydrogenase large subunit family. In terms of assembly, the F420-non-reducing hydrogenase is composed of three subunits; MvhA, MvhD and MvhG. It forms a complex with the heterodisulfide reductase (hdr). The cofactor is Ni(2+).

Part of a complex that provides reducing equivalents for heterodisulfide reductase. In Methanothermobacter marburgensis (strain ATCC BAA-927 / DSM 2133 / JCM 14651 / NBRC 100331 / OCM 82 / Marburg) (Methanobacterium thermoautotrophicum), this protein is F420-non-reducing hydrogenase subunit A (mvhA).